We begin with the raw amino-acid sequence, 139 residues long: Probable trafficking protein particle complex subunit 2 (139 aa).

Belongs to the TRAPP small subunits family. Sedlin subfamily. Part of the multisubunit TRAPP (transport protein particle) complex.

Its subcellular location is the cytoplasm. It is found in the perinuclear region. The protein localises to the endoplasmic reticulum. It localises to the golgi apparatus. May play a role in vesicular transport from endoplasmic reticulum to Golgi. Involved in dsRNA uptake. This chain is Probable trafficking protein particle complex subunit 2, found in Drosophila melanogaster (Fruit fly).